The sequence spans 228 residues: Nucleolar protein 12 (228 aa).

Positions 1–22 (MGKSDRLQQGSKGKGGGKRKHG) are disordered. Residues 40-103 (FHKRKLERRR…AITATTECVQ (64 aa)) are a coiled coil. Residues 126 to 145 (LLEPAQRDGGDGEERERTEA) are compositionally biased toward basic and acidic residues. The segment at 126-228 (LLEPAQRDGG…QTGRNERSQD (103 aa)) is disordered. Over residues 158 to 170 (KIQSLTASLNSLV) the composition is skewed to polar residues. Positions 171 to 180 (KQKKRRKQKR) are enriched in basic residues. Residues 181-195 (RQEAKQRSHQSDRKS) show a composition bias toward basic and acidic residues. The segment covering 204-220 (NKQKQGKSTKRQRRRQT) has biased composition (basic residues).

Belongs to the RRP17 family.

Its subcellular location is the nucleus. The protein resides in the nucleolus. In terms of biological role, may bind to rRNA. This Danio rerio (Zebrafish) protein is Nucleolar protein 12 (nol12).